The following is a 465-amino-acid chain: ATP synthase subunit beta (465 aa).

Residue 152 to 159 participates in ATP binding; it reads GGAGVGKT.

This sequence belongs to the ATPase alpha/beta chains family. In terms of assembly, F-type ATPases have 2 components, CF(1) - the catalytic core - and CF(0) - the membrane proton channel. CF(1) has five subunits: alpha(3), beta(3), gamma(1), delta(1), epsilon(1). CF(0) has three main subunits: a(1), b(2) and c(9-12). The alpha and beta chains form an alternating ring which encloses part of the gamma chain. CF(1) is attached to CF(0) by a central stalk formed by the gamma and epsilon chains, while a peripheral stalk is formed by the delta and b chains.

It is found in the cell inner membrane. The catalysed reaction is ATP + H2O + 4 H(+)(in) = ADP + phosphate + 5 H(+)(out). Its function is as follows. Produces ATP from ADP in the presence of a proton gradient across the membrane. The catalytic sites are hosted primarily by the beta subunits. The protein is ATP synthase subunit beta of Campylobacter hominis (strain ATCC BAA-381 / DSM 21671 / CCUG 45161 / LMG 19568 / NCTC 13146 / CH001A).